The following is a 255-amino-acid chain: Indole-3-glycerol phosphate synthase (255 aa).

Belongs to the TrpC family.

It catalyses the reaction 1-(2-carboxyphenylamino)-1-deoxy-D-ribulose 5-phosphate + H(+) = (1S,2R)-1-C-(indol-3-yl)glycerol 3-phosphate + CO2 + H2O. Its pathway is amino-acid biosynthesis; L-tryptophan biosynthesis; L-tryptophan from chorismate: step 4/5. The protein is Indole-3-glycerol phosphate synthase of Shouchella clausii (strain KSM-K16) (Alkalihalobacillus clausii).